A 403-amino-acid chain; its full sequence is MAEKSTKNETALLVAQSAKSALQDFNHTYSKSWTFGDKWDNSNTMFETFVNKFLFPKINETLLIDIALGNRFNWLAKEQDFIGQYSEEYVIMDTVPINMDLSKNEELMLKRNYPRMATKLYGSGIVKKQKFTLNNNDTRFNFQTLADATNYALGVYKKKISDINVLEEKEMRAMLVDYSLNQLSESNVRKATSKQDLASKVFEAILNLQNNSAKYNEVHRASGGAIGQYTTVSKLKDIVILTTDSLKSYLLDTKIANTFQVAGIDFTDHVISFDDLGGVFKVTKDIVVSSDESVAFLRAYGDYQTHKGDTIPVGSVFTYDVSNLSEFKSNVEEIKPKSDLYAFILDINSIKYKRYTKGMLKQPFYNGEFDEVTHWIHYYSFKAISPFFNKILITDQDVTPRTE.

The protein resides in the virion. Assembles to form an icosahedral capsid. This chain is Major capsid protein, found in Staphylococcus aureus.